Reading from the N-terminus, the 255-residue chain is Electron transfer flavoprotein subunit beta (255 aa).

A2 carries the post-translational modification N-acetylalanine. Residues A9, N39 to C42, C66, and G123 to T134 each bind AMP. A recognition loop region spans residues A183–K205. K200 carries the post-translational modification N6,N6,N6-trimethyllysine; by ETFBKMT; alternate. K200 bears the N6-acetyllysine; alternate mark. K200 is subject to N6-methyllysine; alternate. An N6,N6,N6-trimethyllysine; by ETFBKMT modification is found at K203. K210 is subject to N6-acetyllysine; alternate. K210 is subject to N6-succinyllysine; alternate. Phosphoserine is present on residues S223 and S226. K238 carries the post-translational modification N6-acetyllysine. K248 carries the N6-acetyllysine; alternate modification. K248 is subject to N6-succinyllysine; alternate.

Belongs to the ETF beta-subunit/FixA family. In terms of assembly, heterodimer composed of ETFA and ETFB. Identified in a complex that contains ETFA, ETFB and ETFRF1. Interacts with ACADM. Methylated. Trimethylation at Lys-200 and Lys-203 may negatively regulate the activity in electron transfer from acyl-CoA dehydrogenases.

Its subcellular location is the mitochondrion matrix. In terms of biological role, heterodimeric electron transfer flavoprotein that accepts electrons from several mitochondrial dehydrogenases, including acyl-CoA dehydrogenases, glutaryl-CoA and sarcosine dehydrogenase. It transfers the electrons to the main mitochondrial respiratory chain via ETF-ubiquinone oxidoreductase. Required for normal mitochondrial fatty acid oxidation and normal amino acid metabolism. ETFB binds an AMP molecule that probably has a purely structural role. The chain is Electron transfer flavoprotein subunit beta from Sus scrofa (Pig).